The primary structure comprises 293 residues: Formamidopyrimidine-DNA glycosylase (293 aa).

Catalysis depends on Pro2, which acts as the Schiff-base intermediate with DNA. Residue Glu3 is the Proton donor of the active site. Residue Lys58 is the Proton donor; for beta-elimination activity of the active site. Positions 104, 123, and 166 each coordinate DNA. The FPG-type zinc-finger motif lies at 257–293 (AVYDREGEPCRSKGCDGVVKRFVQNGRSTFWCPKCQK). Residue Arg283 is the Proton donor; for delta-elimination activity of the active site.

It belongs to the FPG family. Monomer. Zn(2+) serves as cofactor.

It catalyses the reaction Hydrolysis of DNA containing ring-opened 7-methylguanine residues, releasing 2,6-diamino-4-hydroxy-5-(N-methyl)formamidopyrimidine.. The catalysed reaction is 2'-deoxyribonucleotide-(2'-deoxyribose 5'-phosphate)-2'-deoxyribonucleotide-DNA = a 3'-end 2'-deoxyribonucleotide-(2,3-dehydro-2,3-deoxyribose 5'-phosphate)-DNA + a 5'-end 5'-phospho-2'-deoxyribonucleoside-DNA + H(+). Involved in base excision repair of DNA damaged by oxidation or by mutagenic agents. Acts as a DNA glycosylase that recognizes and removes damaged bases. Has a preference for oxidized purines, such as 7,8-dihydro-8-oxoguanine (8-oxoG). Has AP (apurinic/apyrimidinic) lyase activity and introduces nicks in the DNA strand. Cleaves the DNA backbone by beta-delta elimination to generate a single-strand break at the site of the removed base with both 3'- and 5'-phosphates. The protein is Formamidopyrimidine-DNA glycosylase of Rhodopseudomonas palustris (strain BisB18).